The chain runs to 574 residues: Multidrug and toxin extrusion protein 1 (574 aa).

At 1-51 (MEGQAAETNHRAETVVRAELCLSAEQGPETTAYSQKRCLFLPMEVWQEAQQ) the chain is on the cytoplasmic side. The helical transmembrane segment at 52-72 (LLALAAPAFLSQLMIFLISIV) threads the bilayer. Residues 73-86 (SSIFCGHLGKVELD) lie on the Extracellular side of the membrane. The helical transmembrane segment at 87–107 (AVSLAITIINITGVAVGTGLA) threads the bilayer. At 108–133 (GACDTLISQTFGGSNLKLVGIILQRG) the chain is on the cytoplasmic side. The chain crosses the membrane as a helical span at residues 134-154 (ILILLLFCFPCWALLINTESI). At 155–168 (LLLFRQDPEVSKLT) the chain is on the extracellular side. Residues 169-189 (QIYVLIFLPALPAAFLYQLLA) form a helical membrane-spanning segment. Residues 190–204 (KYLQNQGIIYPQVLT) lie on the Cytoplasmic side of the membrane. Residues 205-225 (GFIANIFNALFNYILLYVLGL) form a helical membrane-spanning segment. Residues 226 to 230 (GVMGS) lie on the Extracellular side of the membrane. A helical transmembrane segment spans residues 231–251 (ACANTVSQFIQMILLFLYIVW). Residues 252–271 (RRLYADTWGGWSQACFEEWG) are Cytoplasmic-facing. Residues 272–291 (AFIRLAVASMLMLCIEWWAF) traverse the membrane as a helical segment. At 292 to 309 (EISMFLAGVLGMVDLAAQ) the chain is on the extracellular side. The chain crosses the membrane as a helical span at residues 310-330 (AIIYQVAIVVYLIPLGLCIAG). Topologically, residues 331-350 (SIRVGHGLGAGNTEQAKRSA) are cytoplasmic. A helical transmembrane segment spans residues 351–371 (LVVLCMTELCALLSGILLATL). Over 372 to 384 (KDVVAYIFTSDPN) the chain is Extracellular. Residues 385-405 (IVALVSYVLPVYSACLLFDAC) form a helical membrane-spanning segment. At 406–430 (VAACGGILRGSGKLKVGAISHTVGY) the chain is on the cytoplasmic side. A helical membrane pass occupies residues 431-451 (YVIGLPLGISLMFAAKLGIIG). Residues 452–453 (FW) lie on the Extracellular side of the membrane. The helical transmembrane segment at 454 to 472 (FGILACGIAQSIFLIIFVF) threads the bilayer. Over 473 to 549 (KIDWKRASEE…AGAAQHTRTL (77 aa)) the chain is Cytoplasmic. The disordered stretch occupies residues 500 to 541 (KPSVYQEGCPTEQGDVDPGNVESIEFSQSSTSSEGTSPTPAG). Residues 521–538 (ESIEFSQSSTSSEGTSPT) show a composition bias toward low complexity. Residues 550-570 (ILTRGLALGCAVGTLIIGIVI) form a helical membrane-spanning segment. Residues 571–574 (RLSV) are Extracellular-facing.

It belongs to the multi antimicrobial extrusion (MATE) (TC 2.A.66.1) family.

The protein localises to the cell membrane. It is found in the apical cell membrane. The catalysed reaction is thiamine(out) + H(+)(in) = thiamine(in) + H(+)(out). The enzyme catalyses estrone 3-sulfate(in) + H(+)(out) = estrone 3-sulfate(out) + H(+)(in). It catalyses the reaction creatinine(in) + H(+)(out) = creatinine(out) + H(+)(in). It carries out the reaction agmatine(in) + H(+)(out) = agmatine(out) + H(+)(in). Its function is as follows. Multidrug efflux pump that functions as a H(+)/organic cation antiporter. Mediates the secretion of cationic compounds including drugs, toxins and endogenous metabolites. Plays a role physiological role in the excretion of drugs, toxins and endogenous metabolites through the kidney and liver, into urine and bile respectively. The chain is Multidrug and toxin extrusion protein 1 (slc47a1) from Xenopus tropicalis (Western clawed frog).